Here is a 152-residue protein sequence, read N- to C-terminus: Large ribosomal subunit protein uL15 (152 aa).

Positions 1 to 66 (MRSNPMTLRL…GFEGGQTPMQ (66 aa)) are disordered. Positions 28-38 (RGIGSGLGKTA) are enriched in gly residues. A compositionally biased stretch (basic residues) spans 39-52 (GRGHKGSFARKGGG).

Belongs to the universal ribosomal protein uL15 family. Part of the 50S ribosomal subunit.

Binds to the 23S rRNA. The protein is Large ribosomal subunit protein uL15 of Xanthomonas oryzae pv. oryzae (strain KACC10331 / KXO85).